The primary structure comprises 177 residues: B-phycoerythrin beta chain (177 aa).

Positions 50 and 61 each coordinate phycourobilin. Residue asparagine 72 is modified to N4-methylasparagine. (2R,3E)-phycoerythrobilin is bound by residues cysteine 82 and cysteine 158.

It belongs to the phycobiliprotein family. Heteromer of 6 alpha, 6 beta and one gamma chain. Contains two covalently linked phycoerythrobilin chromophores and one covalently linked phycourobilin chromophore.

It localises to the plastid. The protein resides in the chloroplast thylakoid membrane. Its function is as follows. Light-harvesting photosynthetic bile pigment-protein from the phycobiliprotein complex. The polypeptide is B-phycoerythrin beta chain (cpeB) (Rhodella violacea (Red alga)).